The following is a 196-amino-acid chain: RNA polymerase II subunit B1 CTD phosphatase RTR2 (196 aa).

An RTR1-type zinc finger spans residues 52–123; it reads YLARLLSPMS…LSQTPLHERR (72 aa). Cysteine 75, cysteine 80, cysteine 99, and histidine 103 together coordinate Zn(2+).

It belongs to the RPAP2 family.

The protein localises to the cytoplasm. It is found in the nucleus. The catalysed reaction is O-phospho-L-seryl-[protein] + H2O = L-seryl-[protein] + phosphate. It carries out the reaction O-phospho-L-threonyl-[protein] + H2O = L-threonyl-[protein] + phosphate. Probable RNA polymerase II subunit B1 C-terminal domain (CTD) phosphatase that regulates RNA polymerase II transcription. May have functional redundancy with RTR1. The chain is RNA polymerase II subunit B1 CTD phosphatase RTR2 (RTR2) from Saccharomyces cerevisiae (strain ATCC 204508 / S288c) (Baker's yeast).